We begin with the raw amino-acid sequence, 729 residues long: Pentatricopeptide repeat-containing protein At5g01110 (729 aa).

The interval 26-45 (TSSSPVFEPSSSSSSSSSSA) is disordered. Low complexity predominate over residues 27-45 (SSSPVFEPSSSSSSSSSSA). 17 PPR repeats span residues 112-147 (TSLSLSAMIHILVRSGRLSDAQSCLLRMIRRSGVSR), 164-198 (NDSVFDLLIRTYVQARKLREAHEAFTLLRSKGFTV), 199-233 (SIDACNALIGSLVRIGWVELAWGVYQEISRSGVGI), 234-268 (NVYTLNIMVNALCKDGKMEKVGTFLSQVQEKGVYP), 269-303 (DIVTYNTLISAYSSKGLMEEAFELMNAMPGKGFSP), 304-338 (GVYTYNTVINGLCKHGKYERAKEVFAEMLRSGLSP), 339-373 (DSTTYRSLLMEACKKGDVVETEKVFSDMRSRDVVP), 374-408 (DLVCFSSMMSLFTRSGNLDKALMYFNSVKEAGLIP), 409-443 (DNVIYTILIQGYCRKGMISVAMNLRNEMLQQGCAM), 444-478 (DVVTYNTILHGLCKRKMLGEADKLFNEMTERALFP), 479-513 (DSYTLTILIDGHCKLGNLQNAMELFQKMKEKRIRL), 514-548 (DVVTYNTLLDGFGKVGDIDTAKEIWADMVSKEILP), 549-583 (TPISYSILVNALCSKGHLAEAFRVWDEMISKNIKP), 584-618 (TVMICNSMIKGYCRSGNASDGESFLEKMISEGFVP), 619-649 (DCISYNTLIYGFVREENMSKAFGLVKKMEEE), 656-690 (DVFTYNSILHGFCRQNQMKEAEVVLRKMIERGVNP), and 691-725 (DRSTYTCMINGFVSQDNLTEAFRIHDEMLQRGFSP).

The protein belongs to the PPR family. P subfamily.

The sequence is that of Pentatricopeptide repeat-containing protein At5g01110 from Arabidopsis thaliana (Mouse-ear cress).